A 116-amino-acid chain; its full sequence is Host cell factor C1 regulator 1 (116 aa).

Positions 1–22 (MILQQPLERGPPGRDPRATTGV) are disordered. The segment at 54 to 57 (DHPY) is interaction with HCFC1. Residues 88 to 97 (IPEALRLLRL) carry the Nuclear export signal motif.

As to quaternary structure, interacts with HCFC1.

It is found in the cytoplasm. Its subcellular location is the nucleus. Functionally, regulates HCFC1 activity by modulating its subcellular localization. Overexpression of HCFC1R1 leads to accumulation of HCFC1 in the cytoplasm. HCFC1R1-mediated export may provide the pool of cytoplasmic HCFC1 required for import of virion-derived VP16 into the nucleus. This chain is Host cell factor C1 regulator 1 (Hcfc1r1), found in Rattus norvegicus (Rat).